Here is a 223-residue protein sequence, read N- to C-terminus: Ubiquitin carboxyl-terminal hydrolase isozyme L1 (223 aa).

Met-1 is modified (N-acetylmethionine). The UCH catalytic domain occupies 2–221 (QLKPMEINPE…VRFSAVALCK (220 aa)). The interaction with ubiquitin stretch occupies residues 5 to 10 (PMEINP). Cys-90 functions as the Nucleophile in the catalytic mechanism. Ser-125 bears the Phosphoserine mark. His-161 functions as the Proton donor in the catalytic mechanism. Residues 211-216 (EVRFSA) form an interaction with ubiquitin region. Cys-220 carries the S-farnesyl cysteine lipid modification. Residues 221 to 223 (KCA) constitute a propeptide, removed in mature form.

It belongs to the peptidase C12 family. As to quaternary structure, monomer. Homodimer. Interacts with COPS5 and SNCA. Post-translationally, O-glycosylated.

The protein resides in the cytoplasm. It localises to the endoplasmic reticulum membrane. The enzyme catalyses Thiol-dependent hydrolysis of ester, thioester, amide, peptide and isopeptide bonds formed by the C-terminal Gly of ubiquitin (a 76-residue protein attached to proteins as an intracellular targeting signal).. Functionally, ubiquitin-protein hydrolase involved both in the processing of ubiquitin precursors and of ubiquitinated proteins. This enzyme is a thiol protease that recognizes and hydrolyzes a peptide bond at the C-terminal glycine of ubiquitin. Also binds to free monoubiquitin and may prevent its degradation in lysosomes. The homodimer may have ATP-independent ubiquitin ligase activity. The protein is Ubiquitin carboxyl-terminal hydrolase isozyme L1 (UCHL1) of Monodelphis domestica (Gray short-tailed opossum).